An 84-amino-acid polypeptide reads, in one-letter code: Cell division topological specificity factor (84 aa).

This sequence belongs to the MinE family.

Functionally, prevents the cell division inhibition by proteins MinC and MinD at internal division sites while permitting inhibition at polar sites. This ensures cell division at the proper site by restricting the formation of a division septum at the midpoint of the long axis of the cell. The chain is Cell division topological specificity factor from Pseudomonas syringae pv. tomato (strain ATCC BAA-871 / DC3000).